The sequence spans 347 residues: uncharacterized protein (347 aa).

Topologically, residues methionine 1–histidine 44 are cytoplasmic. A helical; Signal-anchor for type II membrane protein transmembrane segment spans residues leucine 45–leucine 62. Residues lysine 63–leucine 347 lie on the Lumenal side of the membrane.

The protein belongs to the glycosyltransferase 34 family.

The protein localises to the endoplasmic reticulum membrane. This is an uncharacterized protein from Schizosaccharomyces pombe (strain 972 / ATCC 24843) (Fission yeast).